A 334-amino-acid chain; its full sequence is Protein RecA (334 aa).

65-72 (GNESSGKT) provides a ligand contact to ATP.

The protein belongs to the RecA family.

It is found in the cytoplasm. Can catalyze the hydrolysis of ATP in the presence of single-stranded DNA, the ATP-dependent uptake of single-stranded DNA by duplex DNA, and the ATP-dependent hybridization of homologous single-stranded DNAs. It interacts with LexA causing its activation and leading to its autocatalytic cleavage. This Ureaplasma parvum serovar 3 (strain ATCC 27815 / 27 / NCTC 11736) protein is Protein RecA.